Consider the following 1009-residue polypeptide: Type VII secretion system accessory factor EsaA (1009 aa).

6 helical membrane-spanning segments follow: residues 7 to 27 (IYAL…IFFV), 822 to 842 (ISPT…AYIF), 869 to 889 (AITS…VGLI), 903 to 923 (KFIL…TYLL), 928 to 948 (SIGM…MNNL), and 979 to 999 (IGLA…LNMF).

Belongs to the EsaA family. As to quaternary structure, homodimer. Interacts with EssB.

Its subcellular location is the cell membrane. Component of the type VII secretion system (Ess). Provides together with EssB and other components such as EssC and EssE a secretion platform across the cytoplasmic membrane in the host. This chain is Type VII secretion system accessory factor EsaA, found in Staphylococcus aureus (strain MRSA252).